Here is a 413-residue protein sequence, read N- to C-terminus: RNA-binding protein 41 (413 aa).

Positions 225–247 (SGSGTAEKPSLLQDKGKQAAQGK) are disordered. In terms of domain architecture, RRM spans 309–387 (KVLYLKNLSP…KILVIEFAKS (79 aa)).

May bind RNA. In Mus musculus (Mouse), this protein is RNA-binding protein 41 (Rbm41).